We begin with the raw amino-acid sequence, 98 residues long: uncharacterized protein (98 aa).

The protein belongs to the CFAP97 family.

This is an uncharacterized protein from Homo sapiens (Human).